The sequence spans 437 residues: O-acetyl-L-homoserine sulfhydrylase (437 aa).

The residue at position 216 (Lys-216) is an N6-(pyridoxal phosphate)lysine.

The protein belongs to the trans-sulfuration enzymes family. In terms of assembly, homohexamer. The cofactor is pyridoxal 5'-phosphate.

The enzyme catalyses O-acetyl-L-homoserine + hydrogen sulfide = L-homocysteine + acetate. It catalyses the reaction O-acetyl-L-homoserine + methanethiol = L-methionine + acetate + H(+). Its pathway is amino-acid biosynthesis; L-methionine biosynthesis via de novo pathway; L-homocysteine from O-acetyl-L-homoserine: step 1/1. Its activity is regulated as follows. Inhibited by methionine and cystathionine. Functionally, catalyzes the conversion of O-acetyl-L-homoserine (OAH) into homocysteine in the methionine biosynthesis pathway. Can also use dimethyldisulfide and methanethiol as reduced sulfur sources, leading to the direct formation of methionine. Has weak cystathionine gamma-synthase activity. The polypeptide is O-acetyl-L-homoserine sulfhydrylase (Corynebacterium glutamicum (strain ATCC 13032 / DSM 20300 / JCM 1318 / BCRC 11384 / CCUG 27702 / LMG 3730 / NBRC 12168 / NCIMB 10025 / NRRL B-2784 / 534)).